Consider the following 141-residue polypeptide: Hemoglobin subunit alpha (141 aa).

The Globin domain occupies 1 to 141 (VLSPADKTNV…VSTVLTSKYR (141 aa)). Ser3 is modified (phosphoserine). An N6-succinyllysine modification is found at Lys7. Thr8 carries the phosphothreonine modification. At Lys11 the chain carries N6-succinyllysine. Lys16 carries the post-translational modification N6-acetyllysine; alternate. Position 16 is an N6-succinyllysine; alternate (Lys16). Tyr24 carries the post-translational modification Phosphotyrosine. The residue at position 35 (Ser35) is a Phosphoserine. Lys40 is modified (N6-succinyllysine). O2 is bound at residue His58. Residue His87 coordinates heme b. Phosphoserine is present on Ser102. The residue at position 108 (Thr108) is a Phosphothreonine. Phosphoserine is present on residues Ser124 and Ser131. A phosphothreonine mark is found at Thr134 and Thr137. At Ser138 the chain carries Phosphoserine.

Belongs to the globin family. In terms of assembly, heterotetramer of two alpha chains and two beta chains. In terms of tissue distribution, red blood cells.

In terms of biological role, involved in oxygen transport from the lung to the various peripheral tissues. Its function is as follows. Hemopressin acts as an antagonist peptide of the cannabinoid receptor CNR1. Hemopressin-binding efficiently blocks cannabinoid receptor CNR1 and subsequent signaling. The polypeptide is Hemoglobin subunit alpha (HBA) (Cynopterus sphinx (Indian short-nosed fruit bat)).